Here is a 351-residue protein sequence, read N- to C-terminus: MKQEPHRQSEEKEKPKGPMAVEREQHTSLSSGTTVTASTGDESTNSRPVESSQTEKSLSLRIRILKQLGFDDIQELNACDTGLVEQFLNVRLINDTKELEKIRESNLAKLNQIIDKCMESDKISDSTLNKILDMSMNRDTNNDNNNHLTIPSPITTKKRKINASELASPRGHRRYRSDIPTVSEVETGVGYPQIHQQPGAYTLPMPANQWMSNPYMQPPQPQVQQIMPQYLYPPGMGPQAQLPTMSSNSESQTPVMSSQFLSLNQHGLYQQNIGAHPVMSMGPQANIYGQQHQLQPGQERDQSRKSFSHRRSQSANISMANFRSPMRNPQPASSQRPVNFLIHTPKHPPPT.

Positions 1–26 are enriched in basic and acidic residues; that stretch reads MKQEPHRQSEEKEKPKGPMAVEREQH. A disordered region spans residues 1–56; it reads MKQEPHRQSEEKEKPKGPMAVEREQHTSLSSGTTVTASTGDESTNSRPVESSQTEK. Over residues 27–56 the composition is skewed to polar residues; it reads TSLSSGTTVTASTGDESTNSRPVESSQTEK. 2 positions are modified to phosphoserine: Ser-152 and Ser-168. Disordered stretches follow at residues 234 to 256 and 291 to 351; these read PGMG…TPVM and QHQL…PPPT. Polar residues predominate over residues 241-256; the sequence is QLPTMSSNSESQTPVM. Ser-314 is subject to Phosphoserine.

The protein belongs to the POG1 family. Phosphorylated by CDC28.

Its subcellular location is the nucleus. Functionally, transcriptional activator which promotes cell cycle recovery with CLN2, after pheromone induced G1 arrest, probably inhibiting the ability of STE20 to activate the pheromone response pathway. Binds the promoters of genes that function in cell cycle regulation, cytoskeletal organization, and spindle assembly. May also be involved in stress-resistance. In Saccharomyces cerevisiae (strain ATCC 204508 / S288c) (Baker's yeast), this protein is Transcriptional activator POG1 (POG1).